The following is a 227-amino-acid chain: Cytosolic-abundant heat soluble protein 106094 (227 aa).

The interval 1 to 28 is disordered; sequence MEAMNMNIPRDAMFVPPPESEQNGYHEK. A coiled-coil region spans residues 90-140; that stretch reads VEEARRDYAAKTRENEMLGQQYEKELERKSEAYRKHQEVEADKIRKELEKQ. CAHS motif regions lie at residues 122-140 and 159-177; these read YRKHQEVEADKIRKELEKQ and QKRMIDLECRYAKKDMDRE. Residues 198–227 are disordered; it reads LDSSAAGTESGGHVVSQSEKFTERNREMKR. Positions 217–227 are enriched in basic and acidic residues; it reads KFTERNREMKR.

Belongs to the Cytosolic-abundant heat soluble protein (CAHS) family.

It localises to the cytoplasm. CAHS proteins are cytosolic heat soluble proteins that seem to contribute to the anhydrobiosis in tardigrades, but their specific mechanisms are yet to be identified. It is possible that protection during anhydrobiosis might occur via the stabilization of vitrifying small molecules such as sugars, but not via the direct glass transition of CAHS proteins themselves. The sequence is that of Cytosolic-abundant heat soluble protein 106094 from Paramacrobiotus richtersi (Water bear).